A 335-amino-acid polypeptide reads, in one-letter code: Methionine import ATP-binding protein MetN (335 aa).

Residues 2–241 enclose the ABC transporter domain; that stretch reads IEFQRLHKSY…PKHVTTRRFV (240 aa). Position 38 to 45 (38 to 45) interacts with ATP; sequence GHSGAGKS.

Belongs to the ABC transporter superfamily. Methionine importer (TC 3.A.1.24) family. In terms of assembly, the complex is composed of two ATP-binding proteins (MetN), two transmembrane proteins (MetI) and a solute-binding protein (MetQ).

Its subcellular location is the cell inner membrane. It carries out the reaction L-methionine(out) + ATP + H2O = L-methionine(in) + ADP + phosphate + H(+). The enzyme catalyses D-methionine(out) + ATP + H2O = D-methionine(in) + ADP + phosphate + H(+). Part of the ABC transporter complex MetNIQ involved in methionine import. Responsible for energy coupling to the transport system. The sequence is that of Methionine import ATP-binding protein MetN from Xanthomonas oryzae pv. oryzae (strain KACC10331 / KXO85).